Consider the following 252-residue polypeptide: 5-oxoprolinase subunit A (252 aa).

The protein belongs to the LamB/PxpA family. In terms of assembly, forms a complex composed of PxpA, PxpB and PxpC.

It carries out the reaction 5-oxo-L-proline + ATP + 2 H2O = L-glutamate + ADP + phosphate + H(+). In terms of biological role, catalyzes the cleavage of 5-oxoproline to form L-glutamate coupled to the hydrolysis of ATP to ADP and inorganic phosphate. The polypeptide is 5-oxoprolinase subunit A (Kocuria rhizophila (strain ATCC 9341 / DSM 348 / NBRC 103217 / DC2201)).